Consider the following 289-residue polypeptide: Acetyl-coenzyme A carboxylase carboxyl transferase subunit beta (289 aa).

In terms of domain architecture, CoA carboxyltransferase N-terminal spans 28 to 289; the sequence is VMTKCPKCKK…QGGEMAVWQS (262 aa). C32, C35, C51, and C54 together coordinate Zn(2+). Residues 32-54 form a C4-type zinc finger; the sequence is CPKCKKIMYTKEVLKNLKVCVNC.

This sequence belongs to the AccD/PCCB family. Acetyl-CoA carboxylase is a heterohexamer composed of biotin carboxyl carrier protein (AccB), biotin carboxylase (AccC) and two subunits each of ACCase subunit alpha (AccA) and ACCase subunit beta (AccD). Zn(2+) serves as cofactor.

It localises to the cytoplasm. It catalyses the reaction N(6)-carboxybiotinyl-L-lysyl-[protein] + acetyl-CoA = N(6)-biotinyl-L-lysyl-[protein] + malonyl-CoA. It participates in lipid metabolism; malonyl-CoA biosynthesis; malonyl-CoA from acetyl-CoA: step 1/1. Its function is as follows. Component of the acetyl coenzyme A carboxylase (ACC) complex. Biotin carboxylase (BC) catalyzes the carboxylation of biotin on its carrier protein (BCCP) and then the CO(2) group is transferred by the transcarboxylase to acetyl-CoA to form malonyl-CoA. This is Acetyl-coenzyme A carboxylase carboxyl transferase subunit beta from Bacillus cereus (strain ZK / E33L).